A 599-amino-acid chain; its full sequence is Elongation factor 4 (599 aa).

The tr-type G domain occupies 5–187 (SHIRNFSIIA…RLVQTIPAPT (183 aa)). Residues 17-22 (DHGKST) and 134-137 (NKMD) contribute to the GTP site.

The protein belongs to the TRAFAC class translation factor GTPase superfamily. Classic translation factor GTPase family. LepA subfamily.

It localises to the cell inner membrane. It catalyses the reaction GTP + H2O = GDP + phosphate + H(+). Functionally, required for accurate and efficient protein synthesis under certain stress conditions. May act as a fidelity factor of the translation reaction, by catalyzing a one-codon backward translocation of tRNAs on improperly translocated ribosomes. Back-translocation proceeds from a post-translocation (POST) complex to a pre-translocation (PRE) complex, thus giving elongation factor G a second chance to translocate the tRNAs correctly. Binds to ribosomes in a GTP-dependent manner. This is Elongation factor 4 from Ectopseudomonas mendocina (strain ymp) (Pseudomonas mendocina).